We begin with the raw amino-acid sequence, 246 residues long: Thiamine import ATP-binding protein ThiQ (246 aa).

The 230-residue stretch at 10–239 (VKLDALAFAY…QGPPAFARYL (230 aa)) folds into the ABC transporter domain. 41 to 48 (GPSGSGKS) is an ATP binding site.

The protein belongs to the ABC transporter superfamily. Thiamine importer (TC 3.A.1.19.1) family. In terms of assembly, the complex is composed of two ATP-binding proteins (ThiQ), two transmembrane proteins (ThiP) and a solute-binding protein (ThiB).

Its subcellular location is the cell inner membrane. It carries out the reaction thiamine(out) + ATP + H2O = thiamine(in) + ADP + phosphate + H(+). Its function is as follows. Part of the ABC transporter complex ThiBPQ involved in thiamine import. Responsible for energy coupling to the transport system. The chain is Thiamine import ATP-binding protein ThiQ from Chelativorans sp. (strain BNC1).